The following is a 261-amino-acid chain: Acyl-[acyl-carrier-protein]--UDP-N-acetylglucosamine O-acyltransferase (261 aa).

Belongs to the transferase hexapeptide repeat family. LpxA subfamily. As to quaternary structure, homotrimer.

The protein localises to the cytoplasm. It carries out the reaction a (3R)-hydroxyacyl-[ACP] + UDP-N-acetyl-alpha-D-glucosamine = a UDP-3-O-[(3R)-3-hydroxyacyl]-N-acetyl-alpha-D-glucosamine + holo-[ACP]. It participates in glycolipid biosynthesis; lipid IV(A) biosynthesis; lipid IV(A) from (3R)-3-hydroxytetradecanoyl-[acyl-carrier-protein] and UDP-N-acetyl-alpha-D-glucosamine: step 1/6. Functionally, involved in the biosynthesis of lipid A, a phosphorylated glycolipid that anchors the lipopolysaccharide to the outer membrane of the cell. This is Acyl-[acyl-carrier-protein]--UDP-N-acetylglucosamine O-acyltransferase from Paracoccus denitrificans (strain Pd 1222).